A 426-amino-acid polypeptide reads, in one-letter code: UDP-N-acetylglucosamine 1-carboxyvinyltransferase (426 aa).

22-23 (KN) lines the phosphoenolpyruvate pocket. Residue R94 coordinates UDP-N-acetyl-alpha-D-glucosamine. C118 serves as the catalytic Proton donor. At C118 the chain carries 2-(S-cysteinyl)pyruvic acid O-phosphothioketal. UDP-N-acetyl-alpha-D-glucosamine-binding positions include 123-127 (RPVDL), D309, and I331.

It belongs to the EPSP synthase family. MurA subfamily.

The protein localises to the cytoplasm. It carries out the reaction phosphoenolpyruvate + UDP-N-acetyl-alpha-D-glucosamine = UDP-N-acetyl-3-O-(1-carboxyvinyl)-alpha-D-glucosamine + phosphate. It functions in the pathway cell wall biogenesis; peptidoglycan biosynthesis. In terms of biological role, cell wall formation. Adds enolpyruvyl to UDP-N-acetylglucosamine. The chain is UDP-N-acetylglucosamine 1-carboxyvinyltransferase from Paracoccus denitrificans (strain Pd 1222).